The primary structure comprises 600 residues: Proline--tRNA ligase (600 aa).

Belongs to the class-II aminoacyl-tRNA synthetase family. ProS type 1 subfamily. Homodimer.

The protein localises to the cytoplasm. It carries out the reaction tRNA(Pro) + L-proline + ATP = L-prolyl-tRNA(Pro) + AMP + diphosphate. Its function is as follows. Catalyzes the attachment of proline to tRNA(Pro) in a two-step reaction: proline is first activated by ATP to form Pro-AMP and then transferred to the acceptor end of tRNA(Pro). As ProRS can inadvertently accommodate and process non-cognate amino acids such as alanine and cysteine, to avoid such errors it has two additional distinct editing activities against alanine. One activity is designated as 'pretransfer' editing and involves the tRNA(Pro)-independent hydrolysis of activated Ala-AMP. The other activity is designated 'posttransfer' editing and involves deacylation of mischarged Ala-tRNA(Pro). The misacylated Cys-tRNA(Pro) is not edited by ProRS. The sequence is that of Proline--tRNA ligase from Acaryochloris marina (strain MBIC 11017).